A 325-amino-acid polypeptide reads, in one-letter code: Biotin synthase (325 aa).

In terms of domain architecture, Radical SAM core spans 43–262 (CSVETAQLLS…VAVARLLMPR (220 aa)). Residues Cys-58, Cys-62, and Cys-65 each coordinate [4Fe-4S] cluster. The [2Fe-2S] cluster site is built by Cys-102, Cys-133, Cys-193, and Arg-266.

Belongs to the radical SAM superfamily. Biotin synthase family. In terms of assembly, homodimer. [4Fe-4S] cluster is required as a cofactor. [2Fe-2S] cluster serves as cofactor.

It catalyses the reaction (4R,5S)-dethiobiotin + (sulfur carrier)-SH + 2 reduced [2Fe-2S]-[ferredoxin] + 2 S-adenosyl-L-methionine = (sulfur carrier)-H + biotin + 2 5'-deoxyadenosine + 2 L-methionine + 2 oxidized [2Fe-2S]-[ferredoxin]. It functions in the pathway cofactor biosynthesis; biotin biosynthesis; biotin from 7,8-diaminononanoate: step 2/2. Catalyzes the conversion of dethiobiotin (DTB) to biotin by the insertion of a sulfur atom into dethiobiotin via a radical-based mechanism. In Azorhizobium caulinodans (strain ATCC 43989 / DSM 5975 / JCM 20966 / LMG 6465 / NBRC 14845 / NCIMB 13405 / ORS 571), this protein is Biotin synthase.